A 154-amino-acid chain; its full sequence is Cold shock domain-containing protein C2 (154 aa).

Disordered regions lie at residues 1-22 and 36-62; these read MTSESTSPPVVPPLHSPKSPVW and ERGGGVSPRDLPSPLPTKRTRTYSATA. Phosphoserine is present on Ser-19. The region spanning 69–136 is the CSD domain; the sequence is VFKGVCKQFS…KFQAVEVVLT (68 aa).

In terms of tissue distribution, brain-specific. Expression restricted to the pyramidal neurons of the cerebral cortex and in the Purkinje cells of the cerebellum.

The protein resides in the nucleus. Its subcellular location is the cytoplasm. In terms of biological role, RNA-binding factor which binds specifically to the very 3'-UTR ends of both histone H1 and H3.3 mRNAs, encompassing the polyadenylation signal. Might play a central role in the negative regulation of histone variant synthesis in the developing brain. This chain is Cold shock domain-containing protein C2 (Csdc2), found in Rattus norvegicus (Rat).